Consider the following 546-residue polypeptide: Hexose transporter HXT10 (546 aa).

At Met-1–Ile-44 the chain is on the cytoplasmic side. The chain crosses the membrane as a helical span at residues Ala-45–Trp-65. Over Asp-66–Gly-100 the chain is Extracellular. The N-linked (GlcNAc...) asparagine glycan is linked to Asn-75. A helical transmembrane segment spans residues Leu-101–Gly-121. Topologically, residues Asp-122–Lys-127 are cytoplasmic. The helical transmembrane segment at Ile-128–Ser-148 threads the bilayer. At Asp-149–Arg-158 the chain is on the extracellular side. Residues Ile-159–Ile-179 traverse the membrane as a helical segment. Topologically, residues Ser-180–Arg-185 are cytoplasmic. A helical membrane pass occupies residues Gly-186 to Thr-206. Over Asn-207–Arg-220 the chain is Extracellular. Residues Val-221–Pro-241 form a helical membrane-spanning segment. Residues Glu-242 to Cys-324 lie on the Cytoplasmic side of the membrane. Residues Asn-325–Gln-341 form a helical membrane-spanning segment. Over Asp-342–Ser-347 the chain is Extracellular. A helical membrane pass occupies residues Ile-348 to Val-365. The Cytoplasmic segment spans residues Asp-366–Lys-372. The helical transmembrane segment at Cys-373–Val-393 threads the bilayer. Topologically, residues Thr-394–Val-415 are extracellular. The helical transmembrane segment at Phe-416–Val-436 threads the bilayer. Topologically, residues Ala-437 to Val-453 are cytoplasmic. A helical transmembrane segment spans residues Gly-454 to Ile-474. Gly-475 is a topological domain (extracellular). A helical transmembrane segment spans residues Phe-476 to Phe-496. The Cytoplasmic segment spans residues Val-497–Lys-546.

This sequence belongs to the major facilitator superfamily. Sugar transporter (TC 2.A.1.1) family.

The protein resides in the membrane. Probable glucose transporter. The protein is Hexose transporter HXT10 (HXT10) of Saccharomyces cerevisiae (strain ATCC 204508 / S288c) (Baker's yeast).